We begin with the raw amino-acid sequence, 350 residues long: Phosphotriesterase-related protein (350 aa).

The a divalent metal cation site is built by His-22, His-24, Glu-169, His-201, His-230, and Asp-298.

Belongs to the metallo-dependent hydrolases superfamily. Phosphotriesterase family. A divalent metal cation is required as a cofactor.

This is Phosphotriesterase-related protein from Drosophila willistoni (Fruit fly).